A 1579-amino-acid polypeptide reads, in one-letter code: tRNA (guanosine(18)-2'-O)-methyltransferase TARBP1 (1579 aa).

The residue at position 1 (Met1) is an N-acetylmethionine. 5 residues coordinate S-adenosyl-L-homocysteine: Val1501, Gly1524, Ile1544, Gln1546, and Leu1553.

It belongs to the class IV-like SAM-binding methyltransferase superfamily. RNA methyltransferase TrmH family. In terms of assembly, monomer and homodimer.

The enzyme catalyses guanosine(18) in tRNA + S-adenosyl-L-methionine = 2'-O-methylguanosine(18) in tRNA + S-adenosyl-L-homocysteine + H(+). In terms of biological role, S-adenosyl-L-methionine-dependent 2'-O-ribose methyltransferase that catalyzes the formation of 2'-O-methylguanosine at position 18 (Gm18) in a subset of tRNA. Selectively mediates Gm18 methylation of tRNAGln-TTG/CTG and tRNASer-TGA/GCT. Gm18 modification can enhance the stability of modified tRNAs. This is tRNA (guanosine(18)-2'-O)-methyltransferase TARBP1 from Mus musculus (Mouse).